The chain runs to 1016 residues: Kinesin-like protein KIN-14K (1016 aa).

The 108-residue stretch at 14–121 folds into the Calponin-homology (CH) domain; sequence ADRRAEVIEW…CLLVLRESVS (108 aa). Residues 123–176 form a disordered region; sequence GLRDGTSKAPLRKKWRVPETGEPLVPGVAQGKTSPGEDKRNGLPDPKSQQKTPI. Residues 288-354 adopt a coiled-coil conformation; it reads VNGTNEENQM…EVMTSMHEQQ (67 aa). The Kinesin motor domain occupies 481-808; sequence NIRVYCRVRP…LKFAERVSGV (328 aa). 565-572 is a binding site for ATP; the sequence is GQTGSGKT. Residues 820-852 are a coiled coil; it reads KDIKELLEQVASLKDTIVRKDTEIEQLQLMKDK. Polar residues-rich tracts occupy residues 884 to 893 and 990 to 1004; these read NQQSQLSDPQ and KTPN…QLIG. Disordered stretches follow at residues 884–912 and 971–1016; these read NQQS…DITP and LTKN…RWQK.

It belongs to the TRAFAC class myosin-kinesin ATPase superfamily. Kinesin family. KIN-14 subfamily.

The sequence is that of Kinesin-like protein KIN-14K from Oryza sativa subsp. japonica (Rice).